The sequence spans 423 residues: Glutamate--cysteine ligase EgtA (423 aa).

This sequence belongs to the glutamate--cysteine ligase type 2 family. EgtA subfamily.

It catalyses the reaction L-cysteine + L-glutamate + ATP = gamma-L-glutamyl-L-cysteine + ADP + phosphate + H(+). The protein operates within amino-acid biosynthesis; ergothioneine biosynthesis. Catalyzes the synthesis of gamma-glutamylcysteine (gamma-GC). This compound is used as substrate for the biosynthesis of the low-molecular thiol compound ergothioneine. In Mycolicibacterium smegmatis (strain ATCC 700084 / mc(2)155) (Mycobacterium smegmatis), this protein is Glutamate--cysteine ligase EgtA.